A 505-amino-acid polypeptide reads, in one-letter code: uncharacterized protein (505 aa).

An N-terminal signal peptide occupies residues 1–19 (MILFTAIILVASVVHVVVS). Topologically, residues 20–483 (SPQQCYYCVE…EQPNSAPRGE (464 aa)) are extracellular. Residues 484 to 504 (IHQLFRCTFVAVFIVFACFIV) traverse the membrane as a helical segment. Residue Cys505 is a topological domain, cytoplasmic.

Component of the acid-insoluble and acid-soluble organic matrix of the aragonitic skeleton (at protein level).

It localises to the membrane. This is an uncharacterized protein from Acropora millepora (Staghorn coral).